The chain runs to 166 residues: Ribosome maturation factor RimM (166 aa).

One can recognise a PRC barrel domain in the interval 92 to 164; it reads EGVYYDFQLI…KIIIDPIPGL (73 aa).

Belongs to the RimM family. In terms of assembly, binds ribosomal protein uS19.

It localises to the cytoplasm. An accessory protein needed during the final step in the assembly of 30S ribosomal subunit, possibly for assembly of the head region. Essential for efficient processing of 16S rRNA. May be needed both before and after RbfA during the maturation of 16S rRNA. It has affinity for free ribosomal 30S subunits but not for 70S ribosomes. The protein is Ribosome maturation factor RimM of Dehalococcoides mccartyi (strain CBDB1).